The following is a 752-amino-acid chain: Complement C2 (752 aa).

An N-terminal signal peptide occupies residues 1 to 20 (MGPLMVLFCLLFLYPGLADS). 3 consecutive Sushi domains span residues 22 to 86 (PSCP…VCKP), 87 to 146 (VRCP…VCDN), and 149 to 206 (GHCP…ICRQ). Intrachain disulfides connect Cys24–Cys64, Cys51–Cys84, Cys89–Cys131, Cys117–Cys144, Cys151–Cys191, and Cys177–Cys204. The N-linked (GlcNAc...) asparagine glycan is linked to Asn29. A glycan (N-linked (GlcNAc...) asparagine) is linked at Asn112. In terms of domain architecture, VWFA spans 254–452 (NLYLLLDCSQ…KALHQVFEHM (199 aa)). The MIDAS-like motif signature appears at 260–264 (DCSQS). Residues Ser262 and Ser264 each coordinate Mg(2+). N-linked (GlcNAc...) asparagine glycans are attached at residues Asn290 and Asn333. Thr337 is a Mg(2+) binding site. Intrachain disulfides connect Cys463/Cys581, Cys492/Cys508, and Cys584/Cys600. The Peptidase S1 domain occupies 464–744 (GVGNMSANAS…MQPWLRQHLG (281 aa)). Residues Asn467 and Asn471 are each glycosylated (N-linked (GlcNAc...) asparagine). Residues His507 and Asp561 each act as charge relay system in the active site. A glycan (N-linked (GlcNAc...) asparagine) is linked at Asn621. 2 cysteine pairs are disulfide-bonded: Cys638-Cys665 and Cys675-Cys705. Ser679 (charge relay system) is an active-site residue.

It belongs to the peptidase S1 family. In terms of assembly, serine protease component of the C3 convertase, also named C4bC2b, composed of the serine protease complement C2b and complement C4b. Serine protease component of the C5 convertase, also named C4bC2bC3b, composed of the serine protease complement C2b, complement C3b, as well as complement C4b. The cofactor is Mg(2+). It depends on Mn(2+) as a cofactor. Post-translationally, cleaved and activated by different proteases depending on the complement pathway to generate complement C2a and serine protease complement C2b chains. Cleaved and activated by C1S following activation by the classical complement system. Cleaved and activated by MASP2 following activation by the lectin complement system. Cleaved and activated by GZMK following activation by the GZMK complement system.

Its subcellular location is the secreted. It is found in the cell surface. The enzyme catalyses Selective cleavage of Arg-|-Ser bond in complement component C3 alpha-chain to form C3a and C3b, and Arg-|-Xaa bond in complement component C5 alpha-chain to form C5a and C5b.. Its function is as follows. Precursor of the catalytic component of the C3 and C5 convertase complexes, which are part of the complement pathway, a cascade of proteins that leads to phagocytosis and breakdown of pathogens and signaling that strengthens the adaptive immune system. Component C2 is part of the classical, lectin and GZMK complement systems. Functionally, catalytic component of the complement C3 and C5 convertase complexes. Following complement activation, recruited to the surface of pathogens by complement C4b opsonin to form the C3 convertase, or C3b and C4b opsonins to form the C5 convertase. As part of the C3 convertase, cleaves and activate C3 into C3a anaphylatoxin and C3b opsonin, the next components of the complement pathways. As part of the C5 convertase, cleaves and activate C5 into C5a anaphylatoxin and C5b component of the membrane attack complex. This chain is Complement C2, found in Pongo pygmaeus (Bornean orangutan).